Consider the following 465-residue polypeptide: MTSLDSILADKYPAKAHARRVAEGLKALGHSGGAIYLEAQKTRLIEDNDEPVPFRQRRPFFYLSGCLLPDSSLVYNIDSDQLTLFIPPINPDDVIWSGLPLSAAEALERYDVDNVLETTEVNATLANIAASHANNSTAFAIAEQVSEGTKFEGFSETNFNVLKGVIERTRVVKDSYEIALLRKANDISAKGHIAAIKASKSATNEREIEAAFIATCIANGAREQSYHPIVACGQNGATLHYGKNDEDLIDPVTNRRKDNVLIDAGAEYRTYCADITRAFPLNGKFLPETRQIYEIVLRMQLECIDMLKEGVQWEDVHAHAHRVAIRGLLELGILRGSEDELFDKRISVAFFPHGLGHYLGMDTHDTGGNPNYEDTDTMFRYLRVRGRLPAGSVITVEPGIYFCRFIIEPFLKNPDLQKYIDVGTLNRYWRVGGVRIEDNVHITKDGHDNLTTAPKTIEEVESLAA.

Mn(2+) is bound by residues Asp-263, Asp-274, Glu-397, and Glu-437.

The protein belongs to the peptidase M24B family. The cofactor is Mn(2+).

The enzyme catalyses Release of any N-terminal amino acid, including proline, that is linked to proline, even from a dipeptide or tripeptide.. Its function is as follows. Catalyzes the removal of a penultimate prolyl residue from the N-termini of peptides. The polypeptide is Probable Xaa-Pro aminopeptidase pepP (pepP) (Emericella nidulans (strain FGSC A4 / ATCC 38163 / CBS 112.46 / NRRL 194 / M139) (Aspergillus nidulans)).